Reading from the N-terminus, the 364-residue chain is DNA replication and repair protein RecF (364 aa).

30 to 37 (GDNGAGKT) contacts ATP.

This sequence belongs to the RecF family.

The protein localises to the cytoplasm. Functionally, the RecF protein is involved in DNA metabolism; it is required for DNA replication and normal SOS inducibility. RecF binds preferentially to single-stranded, linear DNA. It also seems to bind ATP. The sequence is that of DNA replication and repair protein RecF from Stenotrophomonas maltophilia (strain R551-3).